The primary structure comprises 293 residues: Ribosomal protein L11 methyltransferase (293 aa).

Thr145, Gly166, Asp188, and Asn230 together coordinate S-adenosyl-L-methionine.

It belongs to the methyltransferase superfamily. PrmA family.

It is found in the cytoplasm. The catalysed reaction is L-lysyl-[protein] + 3 S-adenosyl-L-methionine = N(6),N(6),N(6)-trimethyl-L-lysyl-[protein] + 3 S-adenosyl-L-homocysteine + 3 H(+). Methylates ribosomal protein L11. This chain is Ribosomal protein L11 methyltransferase, found in Escherichia coli O139:H28 (strain E24377A / ETEC).